The chain runs to 319 residues: uncharacterized protein (319 aa).

Residues 270–290 (AAALWWIPAWLAMIVEVAVLG) form a helical membrane-spanning segment.

It is found in the membrane. This is an uncharacterized protein from Mycobacterium tuberculosis (strain CDC 1551 / Oshkosh).